The primary structure comprises 338 residues: Probable O-antigen biosynthesis glycosyltransferase WbiN (338 aa).

This sequence belongs to the glycosyltransferase group 1 family. Glycosyltransferase 4 subfamily.

It catalyses the reaction N-acetyl-alpha-D-galactosaminyl-di-trans,octa-cis-undecaprenyl diphosphate + UDP-N-acetyl-alpha-D-galactosamine = alpha-D-GalNAc-(1-&gt;3)-alpha-D-GalNAc-di-trans,octa-cis-undecaprenyl diphosphate + UDP + H(+). It functions in the pathway bacterial outer membrane biogenesis; LPS O-antigen biosynthesis. Its function is as follows. Involved in the assembly of the O-repeating unit during O-antigen biosynthesis. This Escherichia coli protein is Probable O-antigen biosynthesis glycosyltransferase WbiN.